The sequence spans 186 residues: Probable peptidyl-tRNA hydrolase 2 (186 aa).

Belongs to the PTH2 family.

It catalyses the reaction an N-acyl-L-alpha-aminoacyl-tRNA + H2O = an N-acyl-L-amino acid + a tRNA + H(+). Its function is as follows. The natural substrate for this enzyme may be peptidyl-tRNAs which drop off the ribosome during protein synthesis. The polypeptide is Probable peptidyl-tRNA hydrolase 2 (Drosophila melanogaster (Fruit fly)).